The following is a 48-amino-acid chain: ATP synthase protein 8 (48 aa).

A helical membrane pass occupies residues 16-36; the sequence is GFLLMTILLVLFSQFFLPMIL.

It belongs to the ATPase protein 8 family. In terms of assembly, F-type ATPases have 2 components, CF(1) - the catalytic core - and CF(0) - the membrane proton channel.

It is found in the mitochondrion membrane. In terms of biological role, mitochondrial membrane ATP synthase (F(1)F(0) ATP synthase or Complex V) produces ATP from ADP in the presence of a proton gradient across the membrane which is generated by electron transport complexes of the respiratory chain. F-type ATPases consist of two structural domains, F(1) - containing the extramembraneous catalytic core and F(0) - containing the membrane proton channel, linked together by a central stalk and a peripheral stalk. During catalysis, ATP synthesis in the catalytic domain of F(1) is coupled via a rotary mechanism of the central stalk subunits to proton translocation. Part of the complex F(0) domain. Minor subunit located with subunit a in the membrane. The polypeptide is ATP synthase protein 8 (ATP8) (Vanderwaltozyma polyspora (strain ATCC 22028 / DSM 70294 / BCRC 21397 / CBS 2163 / NBRC 10782 / NRRL Y-8283 / UCD 57-17) (Kluyveromyces polysporus)).